The primary structure comprises 343 residues: Anthranilate phosphoribosyltransferase (343 aa).

Residues G78, G81–D82, T86, N88–T91, K106–S114, and S118 each bind 5-phospho-alpha-D-ribose 1-diphosphate. Residue G78 participates in anthranilate binding. S90 is a binding site for Mg(2+). N109 contributes to the anthranilate binding site. Anthranilate is bound at residue R164. Residues D223 and E224 each contribute to the Mg(2+) site.

It belongs to the anthranilate phosphoribosyltransferase family. In terms of assembly, homodimer. Mg(2+) is required as a cofactor.

The catalysed reaction is N-(5-phospho-beta-D-ribosyl)anthranilate + diphosphate = 5-phospho-alpha-D-ribose 1-diphosphate + anthranilate. It functions in the pathway amino-acid biosynthesis; L-tryptophan biosynthesis; L-tryptophan from chorismate: step 2/5. Catalyzes the transfer of the phosphoribosyl group of 5-phosphorylribose-1-pyrophosphate (PRPP) to anthranilate to yield N-(5'-phosphoribosyl)-anthranilate (PRA). This Chlamydia caviae (strain ATCC VR-813 / DSM 19441 / 03DC25 / GPIC) (Chlamydophila caviae) protein is Anthranilate phosphoribosyltransferase.